The primary structure comprises 438 residues: Na(+)/H(+) antiporter NhaA (438 aa).

Helical transmembrane passes span 23–43 (FGGIFLFLNAVLAMVVANSFL), 62–82 (FFIGFSLHNWIDDVLMALFFL), 104–124 (SFPVIAAIGGMIAPGLIYFFL), 133–153 (GFGIPMATDIAFALGVIMLLG), 162–182 (VFLITLAVADDLGAIVVIALF), 185–205 (TNLKFAWLLGALGVVLVLAIL), 212–232 (SLIPYLLLGVLLWFCVHQSGI), 302–322 (FLAPISGYFIMPLFAFANAGV), 337–357 (LGVILGLCLGKPLGIFLITFI), 372–392 (WWHILGAGLLAGIGFTMSMFI), and 410–430 (IAILLGSLISGIIGALYLFAL).

The protein belongs to the NhaA Na(+)/H(+) (TC 2.A.33) antiporter family.

The protein resides in the cell inner membrane. It carries out the reaction Na(+)(in) + 2 H(+)(out) = Na(+)(out) + 2 H(+)(in). Functionally, na(+)/H(+) antiporter that extrudes sodium in exchange for external protons. The chain is Na(+)/H(+) antiporter NhaA from Helicobacter pylori (strain J99 / ATCC 700824) (Campylobacter pylori J99).